The chain runs to 251 residues: tRNA-cytidine(32) 2-sulfurtransferase 2 (251 aa).

The PP-loop motif motif lies at 33–38 (SGGKDS). [4Fe-4S] cluster contacts are provided by C108, C111, and C199.

This sequence belongs to the TtcA family. As to quaternary structure, homodimer. It depends on Mg(2+) as a cofactor. [4Fe-4S] cluster serves as cofactor.

The protein resides in the cytoplasm. It carries out the reaction cytidine(32) in tRNA + S-sulfanyl-L-cysteinyl-[cysteine desulfurase] + AH2 + ATP = 2-thiocytidine(32) in tRNA + L-cysteinyl-[cysteine desulfurase] + A + AMP + diphosphate + H(+). It functions in the pathway tRNA modification. In terms of biological role, catalyzes the ATP-dependent 2-thiolation of cytidine in position 32 of tRNA, to form 2-thiocytidine (s(2)C32). The sulfur atoms are provided by the cysteine/cysteine desulfurase (IscS) system. This Francisella tularensis subsp. tularensis (strain WY96-3418) protein is tRNA-cytidine(32) 2-sulfurtransferase 2.